Consider the following 261-residue polypeptide: Proliferating cell nuclear antigen (261 aa).

The interaction with NUDT15 stretch occupies residues 7–100 (VQGSILKKVL…RAEDNADTLA (94 aa)). An N6-acetyllysine mark is found at Lys14, Lys77, and Lys80. The DNA-binding element occupies 61–80 (RCDRNLAMGVNLTSMSKILK). An intrachain disulfide couples Cys135 to Cys162. Lys164 is covalently cross-linked (Glycyl lysine isopeptide (Lys-Gly) (interchain with G-Cter in SUMO2); alternate). Lys164 participates in a covalent cross-link: Glycyl lysine isopeptide (Lys-Gly) (interchain with G-Cter in ubiquitin); alternate. Position 211 is a phosphotyrosine; by EGFR (Tyr211). The residue at position 248 (Lys248) is an N6-acetyllysine. A Glycyl lysine isopeptide (Lys-Gly) (interchain with G-Cter in SUMO2) cross-link involves residue Lys254.

This sequence belongs to the PCNA family. In terms of assembly, homotrimer. Interacts with p300/EP300; the interaction occurs on chromatin in UV-irradiated damaged cells. Interacts with CREBBP (via transactivation domain and C-terminus); the interaction occurs on chromatin in UV-irradiated damaged cells. Directly interacts with POLD1, POLD3 and POLD4 subunits of the DNA polymerase delta complex, POLD3 being the major interacting partner; the interaction with POLD3 is inhibited by CDKN1A/p21(CIP1). Forms a complex with activator 1 heteropentamer in the presence of ATP. Interacts with EXO1, POLH, POLK, DNMT1, ERCC5, FEN1, CDC6 and POLDIP2. Interacts with POLB. Interacts with APEX2; this interaction is triggered by reactive oxygen species and increased by misincorporation of uracil in nuclear DNA. Forms a ternary complex with DNTTIP2 and core histone. Interacts with KCTD10 and PPP1R15A. Interacts with SMARCA5/SNF2H. Interacts with BAZ1B/WSTF; the interaction is direct and is required for BAZ1B/WSTF binding to replication foci during S phase. Interacts with HLTF and SHPRH. Interacts with NUDT15; this interaction is disrupted in response to UV irradiation and acetylation. Interacts with CDKN1A/p21(CIP1) and CDT1; interacts via their PIP-box which also recruits the DCX(DTL) complex. The interaction with CDKN1A inhibits POLD3 binding. Interacts with DDX11. Interacts with EGFR; positively regulates PCNA. Interacts with PARPBP. Interacts (when ubiquitinated) with SPRTN; leading to enhance RAD18-mediated PCNA ubiquitination. Interacts (when polyubiquitinated) with ZRANB3. Interacts with SMARCAD1. Interacts with CDKN1C. Interacts with PCLAF (via PIP-box). Interacts with RTEL1 (via PIP-box); the interaction is direct and essential for the suppression of telomere fragility. Interacts with FAM111A (via PIP-box); the interaction is direct and required for PCNA loading on chromatin binding. Interacts with LIG1. Interacts with SETMAR. Interacts with ANKRD17. Interacts with FBXO18/FBH1 (via PIP-box); the interaction recruits the DCX(DTL) complex and promotes ubiquitination and degradation of FBXO18/FBH1. Interacts with POLN. Interacts with SDE2 (via PIP-box); the interaction is direct and prevents ultraviolet light induced monoubiquitination. Component of the replisome complex composed of at least DONSON, MCM2, MCM7, PCNA and TICRR; interaction at least with PCNA occurs during DNA replication. Interacts with MAPK15; the interaction is chromatin binding dependent and prevents MDM2-mediated PCNA destruction by inhibiting the association of PCNA with MDM2. Interacts with PARP10 (via PIP-box). Interacts with DDI2. Interacts with HMCES (via PIP-box). Interacts with TRAIP (via PIP-box). Interacts with UHRF2. Interacts with ALKBH2; this interaction is enhanced during the S-phase of the cell cycle. Interacts with ATAD5; the interaction promotes USP1-mediated PCNA deubiquitination. Interacts with DNA damage up-regulated protein DDUP. Interacts (when phosphorylated) with GRB2. Interacts with ANG. Interacts with nuclear UNG (isoform 2); this interaction mediates UNG recruitment to S-phase replication foci. Interacts with ERCC6L2 (via an atypical PIP-box); this interaction facilitates cenrtomeric localization of ERCC6L2. (Microbial infection) Interacts with herpes virus 8 protein LANA1. In terms of processing, phosphorylated. Phosphorylation at Tyr-211 by EGFR stabilizes chromatin-associated PCNA. Post-translationally, acetylated by CREBBP and p300/EP300; preferentially acetylated by CREBBP on Lys-80, Lys-13 and Lys-14 and on Lys-77 by p300/EP300 upon loading on chromatin in response to UV irradiation. Lysine acetylation disrupts association with chromatin, hence promoting PCNA ubiquitination and proteasomal degradation in response to UV damage in a CREBBP- and EP300-dependent manner. Acetylation disrupts interaction with NUDT15 and promotes degradation. Ubiquitinated. Following DNA damage, can be either monoubiquitinated to stimulate direct bypass of DNA lesions by specialized DNA polymerases or polyubiquitinated to promote recombination-dependent DNA synthesis across DNA lesions by template switching mechanisms. Following induction of replication stress, monoubiquitinated by the UBE2B-RAD18 complex on Lys-164, leading to recruit translesion (TLS) polymerases, which are able to synthesize across DNA lesions in a potentially error-prone manner. An error-free pathway also exists and requires non-canonical polyubiquitination on Lys-164 through 'Lys-63' linkage of ubiquitin moieties by the E2 complex UBE2N-UBE2V2 and the E3 ligases, HLTF, RNF8 and SHPRH. This error-free pathway, also known as template switching, employs recombination mechanisms to synthesize across the lesion, using as a template the undamaged, newly synthesized strand of the sister chromatid. Monoubiquitination at Lys-164 also takes place in undamaged proliferating cells, and is mediated by the DCX(DTL) complex, leading to enhance PCNA-dependent translesion DNA synthesis. Sumoylated during S phase. In terms of processing, methylated on glutamate residues by ARMT1/C6orf211.

The protein localises to the nucleus. In terms of biological role, auxiliary protein of DNA polymerase delta and epsilon, is involved in the control of eukaryotic DNA replication by increasing the polymerase's processibility during elongation of the leading strand. Induces a robust stimulatory effect on the 3'-5' exonuclease and 3'-phosphodiesterase, but not apurinic-apyrimidinic (AP) endonuclease, APEX2 activities. Has to be loaded onto DNA in order to be able to stimulate APEX2. Plays a key role in DNA damage response (DDR) by being conveniently positioned at the replication fork to coordinate DNA replication with DNA repair and DNA damage tolerance pathways. Acts as a loading platform to recruit DDR proteins that allow completion of DNA replication after DNA damage and promote postreplication repair: Monoubiquitinated PCNA leads to recruitment of translesion (TLS) polymerases, while 'Lys-63'-linked polyubiquitination of PCNA is involved in error-free pathway and employs recombination mechanisms to synthesize across the lesion. This chain is Proliferating cell nuclear antigen (PCNA), found in Homo sapiens (Human).